A 72-amino-acid polypeptide reads, in one-letter code: Putative DNA-directed RNA polymerase subunit omega (72 aa).

Belongs to the RNA polymerase subunit omega family.

It is found in the plastid. It localises to the chloroplast. The catalysed reaction is RNA(n) + a ribonucleoside 5'-triphosphate = RNA(n+1) + diphosphate. Its function is as follows. May be involved in RNA polymerase activity. This chain is Putative DNA-directed RNA polymerase subunit omega (rpoZ), found in Cyanidium caldarium (Red alga).